We begin with the raw amino-acid sequence, 571 residues long: Putative diflavin flavoprotein A 1 (571 aa).

The interval 43–236 (ENGTTYNSFL…PPVQLVATGH (194 aa)) is zinc metallo-hydrolase. Positions 92, 94, 96, 159, 178, and 236 each coordinate Fe cation. Residues 265–426 (VAIFYAANYG…DLDKALGRLS (162 aa)) form the Flavodoxin-like domain. Positions 427–571 (GGLYIITAQK…VHHRKVGNHY (145 aa)) are flavodoxin-reductase-like.

In the N-terminal section; belongs to the zinc metallo-hydrolase group 3 family. This sequence in the C-terminal section; belongs to the flavodoxin reductase family. It depends on Fe cation as a cofactor.

Mediates electron transfer from NADH to oxygen, reducing it to water. This modular protein has 3 redox cofactors, in other organisms the same activity requires 2 or 3 proteins. This is Putative diflavin flavoprotein A 1 (dfa1) from Thermosynechococcus vestitus (strain NIES-2133 / IAM M-273 / BP-1).